Consider the following 211-residue polypeptide: MTRGKLITFEGPDGAGKTTVLERLVPLLQAALGQTIVTTREPGGVAIAEKIRQLILDVSHTTMDDKTELLLYIAARRQHLVEKIMPALESGHLVLVDRFIDSSVAYQGAGRGLDKQAIQWLNHFATDGVDPDLTLYFDVPSELGLARIAQNTEREINRLDLEQLDLHQRVRKGYLELALENPQRIVKIDASQDLESVVSAALAAIITHSQA.

Residue 11–18 coordinates ATP; sequence GPDGAGKT.

This sequence belongs to the thymidylate kinase family.

The enzyme catalyses dTMP + ATP = dTDP + ADP. Phosphorylation of dTMP to form dTDP in both de novo and salvage pathways of dTTP synthesis. The sequence is that of Thymidylate kinase from Streptococcus equi subsp. equi (strain 4047).